A 122-amino-acid polypeptide reads, in one-letter code: Holo-[acyl-carrier-protein] synthase (122 aa).

D5 and E54 together coordinate Mg(2+).

Belongs to the P-Pant transferase superfamily. AcpS family. The cofactor is Mg(2+).

It is found in the cytoplasm. It catalyses the reaction apo-[ACP] + CoA = holo-[ACP] + adenosine 3',5'-bisphosphate + H(+). Functionally, transfers the 4'-phosphopantetheine moiety from coenzyme A to a Ser of acyl-carrier-protein. This chain is Holo-[acyl-carrier-protein] synthase, found in Aquifex aeolicus (strain VF5).